Reading from the N-terminus, the 605-residue chain is Methyl-CpG-binding domain protein 1 (605 aa).

Positions 1–69 (MAEDWLDCPA…TLFDFKQGIL (69 aa)) constitute an MBD domain. The tract at residues 80-123 (AVASKKRKKPSRPAKTRKRQVGPQSGEVRKEAPRDETKADTDTA) is disordered. Residues 83-99 (SKKRKKPSRPAKTRKRQ) are compositionally biased toward basic residues. The Nuclear localization signal motif lies at 84 to 88 (KKRKK). The segment covering 106-120 (EVRKEAPRDETKADT) has biased composition (basic and acidic residues). Lys117 participates in a covalent cross-link: Glycyl lysine isopeptide (Lys-Gly) (interchain with G-Cter in SUMO2). 2 CXXC-type zinc fingers span residues 169 to 216 (RMFK…RRCL) and 217 to 263 (RIVE…RRCL). Residues Cys176, Cys179, Cys182, Cys188, Cys191, Cys194, Cys210, Cys215, Cys225, Cys228, Cys231, Cys237, Cys240, Cys243, Cys257, and Cys262 each contribute to the Zn(2+) site. The interval 269-308 (RRKGGCDSKMAARRRPGAQPLPPPPPSQSPEPTEPHPRAL) is disordered. A Glycyl lysine isopeptide (Lys-Gly) (interchain with G-Cter in SUMO2) cross-link involves residue Lys277. Positions 287–297 (QPLPPPPPSQS) are enriched in pro residues. At Ser297 the chain carries Phosphoserine. The CXXC-type 3 zinc finger occupies 330-378 (TNRRQNRKCGACAACLRRMDCGRCDFCCDKPKFGGSNQKRQKCRWRQCL). Zn(2+) is bound by residues Cys338, Cys341, Cys344, Cys350, Cys353, Cys356, Cys372, and Cys377. A phosphoserine mark is found at Ser391 and Ser399. The interval 391 to 451 (SESEDGAGSP…EAGGGFVLPP (61 aa)) is disordered. Positions 403–417 (YRRRKRPSSARRHHL) are enriched in basic residues. Lys422 participates in a covalent cross-link: Glycyl lysine isopeptide (Lys-Gly) (interchain with G-Cter in SUMO2). A compositionally biased stretch (polar residues) spans 426 to 439 (ATRTAQPDHTQAPT). A Glycyl lysine isopeptide (Lys-Gly) (interchain with G-Cter in SUMO2) cross-link involves residue Lys440. Glycyl lysine isopeptide (Lys-Gly) (interchain with G-Cter in SUMO2); alternate cross-links involve residues Lys499 and Lys538. The disordered stretch occupies residues 520–573 (VLVPGCPSKAVDPGLPSVKQEPPDPEEDKEENKDDSASKLAPEEEAGGAGTPVI). Residues 529–592 (AVDPGLPSVK…RFRDTAVWLP (64 aa)) are transcriptional repression domain (TRD). Lys558 participates in a covalent cross-link: Glycyl lysine isopeptide (Lys-Gly) (interchain with G-Cter in SUMO2).

In terms of assembly, interacts with OASL, ATF7IP, ATF7IP2 and BAHD1. Binds CHAF1A and the SUV39H1-CBX5 complex via the MBD domain. Binds MGP via the TRD domain. May be part of the MeCP1 complex. Sumoylated, sumoylation may increase interaction with ATF7IP. As to expression, widely expressed.

It is found in the nucleus. The protein resides in the nucleus matrix. The protein localises to the nucleus speckle. Its subcellular location is the chromosome. Its function is as follows. Transcriptional repressor that binds CpG islands in promoters where the DNA is methylated at position 5 of cytosine within CpG dinucleotides. Binding is abolished by the presence of 7-mG that is produced by DNA damage by methylmethanesulfonate (MMS). Acts as transcriptional repressor and plays a role in gene silencing by recruiting ATF7IP, which in turn recruits factors such as the histone methyltransferase SETDB1. Probably forms a complex with SETDB1 and ATF7IP that represses transcription and couples DNA methylation and histone 'Lys-9' trimethylation. Isoform 1 and isoform 2 can also repress transcription from unmethylated promoters. The sequence is that of Methyl-CpG-binding domain protein 1 from Homo sapiens (Human).